We begin with the raw amino-acid sequence, 105 residues long: TPR repeat-containing protein PA0015 (105 aa).

2 TPR repeats span residues 17–50 (ALLR…DPKY) and 52–84 (AGWK…AATH).

This chain is TPR repeat-containing protein PA0015, found in Pseudomonas aeruginosa (strain ATCC 15692 / DSM 22644 / CIP 104116 / JCM 14847 / LMG 12228 / 1C / PRS 101 / PAO1).